The chain runs to 311 residues: p-hydroxybenzoic acid efflux pump subunit AaeA (311 aa).

A helical membrane pass occupies residues 11–31; the sequence is VGITVLVVVLAVIAIFNVWAF.

The protein belongs to the membrane fusion protein (MFP) (TC 8.A.1) family.

The protein localises to the cell inner membrane. In terms of biological role, forms an efflux pump with AaeB. This Yersinia pseudotuberculosis serotype O:1b (strain IP 31758) protein is p-hydroxybenzoic acid efflux pump subunit AaeA.